The primary structure comprises 515 residues: SWI/SNF-related matrix-associated actin-dependent regulator of chromatin subfamily D member 1 (515 aa).

Residues 1-103 (MAARAGFQSV…SGMDQSRKRP (103 aa)) form a disordered region. Residues 14 to 23 (GGAGASGGAG) show a composition bias toward gly residues. Residues 43–167 (APGQGLYRSP…DQTIMRKRLD (125 aa)) form an interaction with ESR1, NR1H4, NR3C1, PGR and SMARCA4 region. Asymmetric dimethylarginine occurs at positions 68 and 88. Lysine 101 participates in a covalent cross-link: Glycyl lysine isopeptide (Lys-Gly) (interchain with G-Cter in SUMO2). The interaction with SMARCC1 and SMARCC2 stretch occupies residues 168–474 (IQEALKRPIK…TMTDVVGNPE (307 aa)). Residues 180-515 (RKLRIFISNT…LEQALGIRNT (336 aa)) form a necessary for GR/NR3C1-mediated remodeling and transcription from chromatin; required for GR/NR3C1 interaction with the BRG1/SMARCA4 complex in vivo region. Threonine 203 carries the phosphothreonine modification. Lysine 223 carries the N6-acetyllysine modification. In terms of domain architecture, SWIB/MDM2 spans 290–367 (YQPPQFKLDP…PQRLHALLMP (78 aa)). Residues 412–440 (ASQQEIATLDNKIHETIETINQLKTQREF) are a coiled coil.

Belongs to the SMARCD family. In terms of assembly, component of the multiprotein chromatin-remodeling complexes SWI/SNF: SWI/SNF-A (BAF), SWI/SNF-B (PBAF) and related complexes. The canonical complex contains a catalytic subunit (either SMARCA4/BRG1/BAF190A or SMARCA2/BRM/BAF190B), and at least SMARCE1, ACTL6A/BAF53, SMARCC1/BAF155, SMARCC2/BAF170, and SMARCB1/SNF5/BAF47. Other subunits specific to each of the complexes may also be present permitting several possible combinations developmentally and tissue specific. Component of the BAF complex, which includes at least actin (ACTB), ARID1A/BAF250A, ARID1B/BAF250B, SMARCA2/BRM, SMARCA4/BRG1/BAF190A, ACTL6A/BAF53, ACTL6B/BAF53B, SMARCE1/BAF57, SMARCC1/BAF155, SMARCC2/BAF170, SMARCB1/SNF5/INI1, and one or more SMARCD1/BAF60A, SMARCD2/BAF60B, or SMARCD3/BAF60C. In muscle cells, the BAF complex also contains DPF3. Component of neural progenitors-specific chromatin remodeling complex (npBAF complex) composed of at least, ARID1A/BAF250A or ARID1B/BAF250B, SMARCD1/BAF60A, SMARCD3/BAF60C, SMARCA2/BRM/BAF190B, SMARCA4/BRG1/BAF190A, SMARCB1/BAF47, SMARCC1/BAF155, SMARCE1/BAF57, SMARCC2/BAF170, PHF10/BAF45A, ACTL6A/BAF53A and actin. Component of neuron-specific chromatin remodeling complex (nBAF complex) composed of at least, ARID1A/BAF250A or ARID1B/BAF250B, SMARCD1/BAF60A, SMARCD3/BAF60C, SMARCA2/BRM/BAF190B, SMARCA4/BRG1/BAF190A, SMARCB1/BAF47, SMARCC1/BAF155, SMARCE1/BAF57, SMARCC2/BAF170, DPF1/BAF45B, DPF3/BAF45C, ACTL6B/BAF53B and actin. Component of the SWI/SNF-B (PBAF) chromatin remodeling complex, at least composed of SMARCA4/BRG1, SMARCB1/BAF47/SNF5, ACTL6A/BAF53A or ACTL6B/BAF53B, SMARCE1/BAF57, SMARCD1/BAF60A, SMARCD2/BAF60B, perhaps SMARCD3/BAF60C, SMARCC1/BAF155, SMARCC2/BAF170, PBRM1/BAF180, ARID2/BAF200 and actin (ACTB). Component of SWI/SNF (GBAF) subcomplex, which includes at least BICRA or BICRAL (mutually exclusive), BRD9, SS18, SMARCA2/BRM, SMARCA4/BRG1/BAF190A, ACTL6A/BAF53, SMARCC1/BAF155, and SMARCD1/BAF60A. Specifically interacts with the VDR heterodimer complex. Interacts with ESR1, NR3C1, NR1H4, PGR, SMARCA4, SMARCC1 and SMARCC2. Interacts with DPF2. Interacts with DPF3a (isoform 2 of DPF3/BAF45C) and with HDGFL2 in a DPF3a-dependent manner. Interacts with FOS, FOSB isoform 1 and 2, FOSL1 and FOSL2. As to expression, expressed in all tissues tested, including brain, heart, kidney, liver, lung, muscle, pancreas and placenta.

The protein localises to the nucleus. Its function is as follows. Involved in transcriptional activation and repression of select genes by chromatin remodeling (alteration of DNA-nucleosome topology). Component of SWI/SNF chromatin remodeling complexes that carry out key enzymatic activities, changing chromatin structure by altering DNA-histone contacts within a nucleosome in an ATP-dependent manner. Belongs to the neural progenitors-specific chromatin remodeling complex (npBAF complex) and the neuron-specific chromatin remodeling complex (nBAF complex). During neural development a switch from a stem/progenitor to a postmitotic chromatin remodeling mechanism occurs as neurons exit the cell cycle and become committed to their adult state. The transition from proliferating neural stem/progenitor cells to postmitotic neurons requires a switch in subunit composition of the npBAF and nBAF complexes. As neural progenitors exit mitosis and differentiate into neurons, npBAF complexes which contain ACTL6A/BAF53A and PHF10/BAF45A, are exchanged for homologous alternative ACTL6B/BAF53B and DPF1/BAF45B or DPF3/BAF45C subunits in neuron-specific complexes (nBAF). The npBAF complex is essential for the self-renewal/proliferative capacity of the multipotent neural stem cells. The nBAF complex along with CREST plays a role regulating the activity of genes essential for dendrite growth. Has a strong influence on vitamin D-mediated transcriptional activity from an enhancer vitamin D receptor element (VDRE). May be a link between mammalian SWI-SNF-like chromatin remodeling complexes and the vitamin D receptor (VDR) heterodimer. Mediates critical interactions between nuclear receptors and the BRG1/SMARCA4 chromatin-remodeling complex for transactivation. Interacts with AKIRIN2. The chain is SWI/SNF-related matrix-associated actin-dependent regulator of chromatin subfamily D member 1 from Homo sapiens (Human).